Reading from the N-terminus, the 320-residue chain is D-alanine--D-alanine ligase (320 aa).

Residues Ser-120–Lys-314 form the ATP-grasp domain. Position 147 to 198 (Met-147 to Gln-198) interacts with ATP. 3 residues coordinate Mg(2+): Glu-267, Glu-281, and Asn-283.

Belongs to the D-alanine--D-alanine ligase family. It depends on Mg(2+) as a cofactor. Mn(2+) is required as a cofactor.

It localises to the cytoplasm. It catalyses the reaction 2 D-alanine + ATP = D-alanyl-D-alanine + ADP + phosphate + H(+). Its pathway is cell wall biogenesis; peptidoglycan biosynthesis. In terms of biological role, cell wall formation. The sequence is that of D-alanine--D-alanine ligase from Rickettsia akari (strain Hartford).